Reading from the N-terminus, the 205-residue chain is Probable calcium-binding protein CML41 (205 aa).

Positions 26-55 are disordered; sequence SFQNRRRSPKSNSSSTLNSPRSNSDDNNNI. Residues 35–54 show a composition bias toward low complexity; that stretch reads KSNSSSTLNSPRSNSDDNNN. 4 consecutive EF-hand domains span residues 60–95, 96–131, 137–173, and 174–205; these read ASKE…VGEY, ISHE…RDLY, DGDG…LGES, and RTYG…MMTV. Ca(2+) is bound by residues Asp73, Asp75, Asp77, Lys79, Glu84, Asp109, Asp111, Asp113, Ser115, and Asp120. 4 residues coordinate Ca(2+): Asp187, Asp189, Asn191, and Glu198.

Functionally, potential calcium sensor. The chain is Probable calcium-binding protein CML41 (CML41) from Arabidopsis thaliana (Mouse-ear cress).